The primary structure comprises 397 residues: Glutamate 5-kinase (397 aa).

The interval 1–28 (MVADLTSDISESQEQETETNSANNNGAV) is disordered. Residue Lys-40 coordinates ATP. Substrate-binding residues include Ser-80, Asp-168, and Asn-180. ATP is bound by residues 200-201 (SD) and 243-249 (SGGMASK). A PUA domain is found at 306–383 (HGQVYIDQGA…QEIADILGYE (78 aa)).

Belongs to the glutamate 5-kinase family.

Its subcellular location is the cytoplasm. The enzyme catalyses L-glutamate + ATP = L-glutamyl 5-phosphate + ADP. Its pathway is amino-acid biosynthesis; L-proline biosynthesis; L-glutamate 5-semialdehyde from L-glutamate: step 1/2. Functionally, catalyzes the transfer of a phosphate group to glutamate to form L-glutamate 5-phosphate. The protein is Glutamate 5-kinase of Zymomonas mobilis subsp. mobilis (strain ATCC 31821 / ZM4 / CP4).